A 676-amino-acid polypeptide reads, in one-letter code: Periplasmic alpha-amylase (676 aa).

An N-terminal signal peptide occupies residues 1-17 (MKLAACFLTLLPGFAVA). 2 disulfide bridges follow: cysteine 57-cysteine 75 and cysteine 121-cysteine 537. Residue asparagine 314 coordinates Ca(2+). The active-site Nucleophile is the aspartate 460. Residue histidine 464 coordinates Ca(2+). Residue glutamate 503 is the Proton donor of the active site.

The protein belongs to the glycosyl hydrolase 13 family. In terms of assembly, monomer. Ca(2+) serves as cofactor.

Its subcellular location is the periplasm. The catalysed reaction is Endohydrolysis of (1-&gt;4)-alpha-D-glucosidic linkages in polysaccharides containing three or more (1-&gt;4)-alpha-linked D-glucose units.. Functionally, since only maltooligosaccharides up to a chain length of 6 glucose units are actively transported through the cytoplasmic membrane via the membrane-bound complex of three proteins, MalF, MalG, and MalK, longer maltooligosaccharides must first be degraded by the periplasmic alpha-amylase, the MalS protein. The polypeptide is Periplasmic alpha-amylase (malS) (Escherichia coli (strain K12)).